A 393-amino-acid polypeptide reads, in one-letter code: CCA-adding enzyme (393 aa).

Residues Gly27 and Arg30 each coordinate ATP. CTP contacts are provided by Gly27 and Arg30. 2 residues coordinate Mg(2+): Asp40 and Asp42. ATP is bound by residues Arg111, Asp154, Arg157, Arg160, and Arg163. Residues Arg111, Asp154, Arg157, Arg160, and Arg163 each contribute to the CTP site.

This sequence belongs to the tRNA nucleotidyltransferase/poly(A) polymerase family. Bacterial CCA-adding enzyme type 3 subfamily. As to quaternary structure, homodimer. It depends on Mg(2+) as a cofactor.

The enzyme catalyses a tRNA precursor + 2 CTP + ATP = a tRNA with a 3' CCA end + 3 diphosphate. The catalysed reaction is a tRNA with a 3' CCA end + 2 CTP + ATP = a tRNA with a 3' CCACCA end + 3 diphosphate. Its function is as follows. Catalyzes the addition and repair of the essential 3'-terminal CCA sequence in tRNAs without using a nucleic acid template. Adds these three nucleotides in the order of C, C, and A to the tRNA nucleotide-73, using CTP and ATP as substrates and producing inorganic pyrophosphate. tRNA 3'-terminal CCA addition is required both for tRNA processing and repair. Also involved in tRNA surveillance by mediating tandem CCA addition to generate a CCACCA at the 3' terminus of unstable tRNAs. While stable tRNAs receive only 3'-terminal CCA, unstable tRNAs are marked with CCACCA and rapidly degraded. The polypeptide is CCA-adding enzyme (Listeria monocytogenes serotype 4b (strain F2365)).